Consider the following 110-residue polypeptide: UPF0145 protein (110 aa).

It belongs to the UPF0145 family.

The polypeptide is UPF0145 protein (Listeria ivanovii).